The chain runs to 179 residues: Large ribosomal subunit protein uL5 (179 aa).

This sequence belongs to the universal ribosomal protein uL5 family. Part of the 50S ribosomal subunit; part of the 5S rRNA/L5/L18/L25 subcomplex. Contacts the 5S rRNA and the P site tRNA. Forms a bridge to the 30S subunit in the 70S ribosome.

This is one of the proteins that bind and probably mediate the attachment of the 5S RNA into the large ribosomal subunit, where it forms part of the central protuberance. In the 70S ribosome it contacts protein S13 of the 30S subunit (bridge B1b), connecting the 2 subunits; this bridge is implicated in subunit movement. Contacts the P site tRNA; the 5S rRNA and some of its associated proteins might help stabilize positioning of ribosome-bound tRNAs. This is Large ribosomal subunit protein uL5 from Enterococcus faecalis (strain ATCC 700802 / V583).